A 147-amino-acid polypeptide reads, in one-letter code: 3-dehydroquinate dehydratase 2 (147 aa).

Tyr23 acts as the Proton acceptor in catalysis. Substrate is bound by residues Asn74, His80, and Asp87. The Proton donor role is filled by His100. Residues 101 to 102 (IS) and Arg111 each bind substrate.

This sequence belongs to the type-II 3-dehydroquinase family. In terms of assembly, homododecamer.

It catalyses the reaction 3-dehydroquinate = 3-dehydroshikimate + H2O. Its pathway is metabolic intermediate biosynthesis; chorismate biosynthesis; chorismate from D-erythrose 4-phosphate and phosphoenolpyruvate: step 3/7. In terms of biological role, catalyzes a trans-dehydration via an enolate intermediate. The sequence is that of 3-dehydroquinate dehydratase 2 (aroQ2) from Agrobacterium fabrum (strain C58 / ATCC 33970) (Agrobacterium tumefaciens (strain C58)).